A 646-amino-acid polypeptide reads, in one-letter code: Phosphomethylpyrimidine synthase (646 aa).

Residues N235, M264, Y293, H329, 349-351, 390-393, and E429 each bind substrate; these read SRG and DGLR. Position 433 (H433) interacts with Zn(2+). A substrate-binding site is contributed by Y456. H497 lines the Zn(2+) pocket. [4Fe-4S] cluster contacts are provided by C577, C580, and C585. A disordered region spans residues 624-646; sequence KSEEFRATGSELYHPAVHAEADE.

Belongs to the ThiC family. Homodimer. It depends on [4Fe-4S] cluster as a cofactor.

It catalyses the reaction 5-amino-1-(5-phospho-beta-D-ribosyl)imidazole + S-adenosyl-L-methionine = 4-amino-2-methyl-5-(phosphooxymethyl)pyrimidine + CO + 5'-deoxyadenosine + formate + L-methionine + 3 H(+). Its pathway is cofactor biosynthesis; thiamine diphosphate biosynthesis. In terms of biological role, catalyzes the synthesis of the hydroxymethylpyrimidine phosphate (HMP-P) moiety of thiamine from aminoimidazole ribotide (AIR) in a radical S-adenosyl-L-methionine (SAM)-dependent reaction. The sequence is that of Phosphomethylpyrimidine synthase from Vibrio parahaemolyticus serotype O3:K6 (strain RIMD 2210633).